Consider the following 741-residue polypeptide: Catalase-peroxidase 2 (741 aa).

The N-terminal stretch at 1-27 (MKINTLPTLSALTLAMSLALGAGMATA) is a signal peptide. The segment at residues 106–229 (WHSAGVYRIF…MGATQMGLIY (124 aa)) is a cross-link (tryptophyl-tyrosyl-methioninium (Trp-Tyr) (with M-255)). H107 serves as the catalytic Proton acceptor. The segment at residues 229–255 (YVNPEGPNGVPDPLASAKEIRDTFGRM) is a cross-link (tryptophyl-tyrosyl-methioninium (Tyr-Met) (with W-106)). Heme b is bound at residue H270.

The protein belongs to the peroxidase family. Peroxidase/catalase subfamily. Homodimer or homotetramer. Requires heme b as cofactor. Post-translationally, formation of the three residue Trp-Tyr-Met cross-link is important for the catalase, but not the peroxidase activity of the enzyme.

It catalyses the reaction H2O2 + AH2 = A + 2 H2O. The catalysed reaction is 2 H2O2 = O2 + 2 H2O. Its function is as follows. Bifunctional enzyme with both catalase and broad-spectrum peroxidase activity. The polypeptide is Catalase-peroxidase 2 (Shewanella oneidensis (strain ATCC 700550 / JCM 31522 / CIP 106686 / LMG 19005 / NCIMB 14063 / MR-1)).